Consider the following 421-residue polypeptide: Bestrophin homolog 2 (421 aa).

The next 4 membrane-spanning stretches (helical) occupy residues 28-48 (IWKA…IISV), 73-93 (LSFI…VDRW), 239-259 (LMYP…SIIA), and 275-295 (VYFP…LKVI).

It belongs to the anion channel-forming bestrophin (TC 1.A.46) family. Calcium-sensitive chloride channel subfamily. Forms oligomers.

The protein localises to the cell membrane. Its function is as follows. Forms chloride channels. The chain is Bestrophin homolog 2 (best-2) from Caenorhabditis elegans.